The primary structure comprises 67 residues: Large ribosomal subunit protein uL29 (67 aa).

The protein belongs to the universal ribosomal protein uL29 family.

This is Large ribosomal subunit protein uL29 from Methanosarcina mazei (strain ATCC BAA-159 / DSM 3647 / Goe1 / Go1 / JCM 11833 / OCM 88) (Methanosarcina frisia).